Consider the following 271-residue polypeptide: 3-methyl-2-oxobutanoate hydroxymethyltransferase (271 aa).

2 residues coordinate Mg(2+): D51 and D90. 3-methyl-2-oxobutanoate is bound by residues 51-52 (DS), D90, and K119. E121 contributes to the Mg(2+) binding site. E188 (proton acceptor) is an active-site residue.

The protein belongs to the PanB family. Homodecamer; pentamer of dimers. Mg(2+) serves as cofactor.

Its subcellular location is the cytoplasm. It carries out the reaction 3-methyl-2-oxobutanoate + (6R)-5,10-methylene-5,6,7,8-tetrahydrofolate + H2O = 2-dehydropantoate + (6S)-5,6,7,8-tetrahydrofolate. It participates in cofactor biosynthesis; (R)-pantothenate biosynthesis; (R)-pantoate from 3-methyl-2-oxobutanoate: step 1/2. Functionally, catalyzes the reversible reaction in which hydroxymethyl group from 5,10-methylenetetrahydrofolate is transferred onto alpha-ketoisovalerate to form ketopantoate. This Azoarcus sp. (strain BH72) protein is 3-methyl-2-oxobutanoate hydroxymethyltransferase.